We begin with the raw amino-acid sequence, 1203 residues long: DNA-directed RNA polymerase subunit beta (1203 aa).

Positions 1174-1195 (AAQEAKAAFEAEEAEKATKAEA) are enriched in basic and acidic residues. The tract at residues 1174-1203 (AAQEAKAAFEAEEAEKATKAEATEEAAEQE) is disordered.

It belongs to the RNA polymerase beta chain family. As to quaternary structure, the RNAP catalytic core consists of 2 alpha, 1 beta, 1 beta' and 1 omega subunit. When a sigma factor is associated with the core the holoenzyme is formed, which can initiate transcription.

The enzyme catalyses RNA(n) + a ribonucleoside 5'-triphosphate = RNA(n+1) + diphosphate. Functionally, DNA-dependent RNA polymerase catalyzes the transcription of DNA into RNA using the four ribonucleoside triphosphates as substrates. The chain is DNA-directed RNA polymerase subunit beta from Streptococcus pneumoniae (strain P1031).